Reading from the N-terminus, the 524-residue chain is Zinc finger protein GLIS2 (524 aa).

An interaction with CTNND1 region spans residues 35–174 (ALHRELGLVD…PKQLVCRWAK (140 aa)). 2 disordered regions span residues 39–62 (ELGLVDDSPTPGSPGSPPSGFLLN) and 84–114 (SPPSGLDSPNGSSSLSPERQGNGDLPPVPSA). The tract at residues 71 to 137 (GRFSAAPLVD…SSFQFFLPLG (67 aa)) is transcription activation. A compositionally biased stretch (low complexity) spans 84-100 (SPPSGLDSPNGSSSLSP). The tract at residues 148-171 (SFLTPPKDKCLSPDLPLPKQLVCR) is transcription repression. Residues 168-193 (LVCRWAKCNQLFELLQDLVDHVNDYH) form a C2H2-type 1 zinc finger. The segment at 202-229 (YCCHWEGCARHGRGFNARYKMLIHIRTH) adopts a C2H2-type 2; atypical zinc-finger fold. 3 consecutive C2H2-type zinc fingers follow at residues 235-257 (HRCPTCSKSFSRLENLKIHNRSH), 263-287 (YVCPYEGCNKRYSNSSDRFKHTRTH), and 293-317 (YYCKMPGCHKRYTDPSSLRKHIKAH). The tract at residues 439–480 (GGKAEGEKGRGSVPTRALGMEGHKTPLERTESSCSRPSPDGL) is disordered. The segment covering 459–469 (EGHKTPLERTE) has biased composition (basic and acidic residues).

The protein belongs to the GLI C2H2-type zinc-finger protein family. In terms of assembly, interacts with CTBP1 and HDAC3. Interacts with CTNNB1. Interacts with SUFU. Interacts with CTNND1. In terms of processing, C-terminus cleavage is induced by interaction with CTNND1 and enhanced by Src tyrosine kinase. In terms of tissue distribution, expressed at high levels in kidney and at low levels in heart, lung and placenta. Expressed in colon.

It is found in the nucleus speckle. The protein resides in the cytoplasm. Its function is as follows. Can act either as a transcriptional repressor or as a transcriptional activator, depending on the cell context. Acts as a repressor of the Hedgehog signaling pathway. Represses the Hedgehog-dependent expression of Wnt4. Necessary to maintain the differentiated epithelial phenotype in renal cells through the inhibition of SNAI1, which itself induces the epithelial-to-mesenchymal transition. Represses transcriptional activation mediated by CTNNB1 in the Wnt signaling pathway. May act by recruiting the corepressors CTBP1 and HDAC3. May be involved in neuron differentiation. This Homo sapiens (Human) protein is Zinc finger protein GLIS2 (GLIS2).